A 510-amino-acid polypeptide reads, in one-letter code: NAD(P)H-quinone oxidoreductase subunit 2, chloroplastic (510 aa).

Transmembrane regions (helical) follow at residues 24 to 44 (LLLF…GLIL), 59 to 79 (WFYF…LFRW), 99 to 119 (IFQF…VEYI), 124 to 144 (MAIT…MFLC), 149 to 169 (FITI…LSGY), 183 to 203 (YLLM…WLYG), 229 to 249 (ISIA…PAPF), 295 to 315 (WHLL…LIAI), 323 to 343 (MLAY…IVGD), 347 to 367 (GYAS…GTFA), 395 to 415 (ALSL…AGFF), and 418 to 438 (LHLF…IGLL).

The protein belongs to the complex I subunit 2 family. NDH is composed of at least 16 different subunits, 5 of which are encoded in the nucleus.

It is found in the plastid. It localises to the chloroplast thylakoid membrane. It carries out the reaction a plastoquinone + NADH + (n+1) H(+)(in) = a plastoquinol + NAD(+) + n H(+)(out). The catalysed reaction is a plastoquinone + NADPH + (n+1) H(+)(in) = a plastoquinol + NADP(+) + n H(+)(out). Its function is as follows. NDH shuttles electrons from NAD(P)H:plastoquinone, via FMN and iron-sulfur (Fe-S) centers, to quinones in the photosynthetic chain and possibly in a chloroplast respiratory chain. The immediate electron acceptor for the enzyme in this species is believed to be plastoquinone. Couples the redox reaction to proton translocation, and thus conserves the redox energy in a proton gradient. The sequence is that of NAD(P)H-quinone oxidoreductase subunit 2, chloroplastic from Phormium tenax (New Zealand flax).